We begin with the raw amino-acid sequence, 267 residues long: Serine/threonine-protein kinase 1 (267 aa).

The region spanning 18–266 (IQNNVRLVDG…YETVIKHSFL (249 aa)) is the Protein kinase domain. ATP contacts are provided by residues 24–32 (LVDGKFGKM) and lysine 47. Aspartate 134 serves as the catalytic Proton acceptor.

The protein belongs to the protein kinase superfamily. Ser/Thr protein kinase family.

The catalysed reaction is L-seryl-[protein] + ATP = O-phospho-L-seryl-[protein] + ADP + H(+). It catalyses the reaction L-threonyl-[protein] + ATP = O-phospho-L-threonyl-[protein] + ADP + H(+). The polypeptide is Serine/threonine-protein kinase 1 (PK1) (Heliothis zea nuclear polyhedrosis virus (HzSNPV)).